Reading from the N-terminus, the 716-residue chain is ATP-dependent zinc metalloprotease FTSH 1, chloroplastic (716 aa).

The transit peptide at 1-48 (MASNSLLRSSSNFFLGSHIIISSPTPKTTRKPSFPFSFVSRAKYQITR) directs the protein to the chloroplast. The N-terminal 38 residues, 49-86 (SSQDENSPNGKPNSPFSSQVALAAILLSSISSSPLALA), are a transit peptide targeting the thylakoid. Residues 204–224 (FTVIGNLIFPLLAFGGLFLLF) traverse the membrane as a helical segment. Position 302 to 309 (302 to 309 (GPPGTGKT)) interacts with ATP. Position 524 (histidine 524) interacts with Zn(2+). The active site involves glutamate 525. The Zn(2+) site is built by histidine 528 and aspartate 605.

It in the N-terminal section; belongs to the AAA ATPase family. In the C-terminal section; belongs to the peptidase M41 family. Interacts with CHIP and HSP70. Heterohexamers with FTSH2, FTSH5 and FTSH8. It depends on Zn(2+) as a cofactor. In terms of processing, the FTSH1 precursor is ubiquitinated by CHIP in the cytoplasm. As to expression, ubiquitous.

It is found in the plastid. Its subcellular location is the chloroplast thylakoid membrane. Functionally, part of a complex that function as an ATP-dependent zinc metallopeptidase. Involved in the thylakoid formation and in the removal of damaged D1 in the photosystem II, preventing cell death under high-intensity light conditions. The protein is ATP-dependent zinc metalloprotease FTSH 1, chloroplastic (FTSH1) of Arabidopsis thaliana (Mouse-ear cress).